A 57-amino-acid polypeptide reads, in one-letter code: Large ribosomal subunit protein bL32 (57 aa).

A compositionally biased stretch (basic residues) spans 1-20 (MAVPKRRMSRSNTRSRRAQW). The interval 1–22 (MAVPKRRMSRSNTRSRRAQWKA) is disordered.

Belongs to the bacterial ribosomal protein bL32 family.

This chain is Large ribosomal subunit protein bL32, found in Mycobacterium sp. (strain JLS).